The sequence spans 119 residues: MARSVAVVFLMLLSVVCLDAIQRPPQVQVYTRHPPEDGKTNFLNCYVSQFHPPQIEIELLKNGKKMDKVELSDLSFNKDWSFYLLAHTEFTPTATDKYACRVTHTTLKEPKVVTWERDM.

The N-terminal stretch at 1–20 (MARSVAVVFLMLLSVVCLDA) is a signal peptide. An Ig-like C1-type domain is found at 25–114 (PQVQVYTRHP…TTLKEPKVVT (90 aa)). An intrachain disulfide couples Cys45 to Cys100.

This sequence belongs to the beta-2-microglobulin family. In terms of assembly, heterodimer of an alpha chain and a beta chain. Beta-2-microglobulin is the beta-chain of major histocompatibility complex class I molecules.

Its subcellular location is the secreted. In terms of biological role, component of the class I major histocompatibility complex (MHC). Involved in the presentation of peptide antigens to the immune system. This is Beta-2-microglobulin (B2M) from Cricetulus griseus (Chinese hamster).